The sequence spans 166 residues: Pyruvoyl-dependent arginine decarboxylase (166 aa).

Ser45 bears the Pyruvic acid (Ser) mark.

It belongs to the PdaD family. It depends on pyruvate as a cofactor.

The catalysed reaction is L-arginine + H(+) = agmatine + CO2. In Methanocella arvoryzae (strain DSM 22066 / NBRC 105507 / MRE50), this protein is Pyruvoyl-dependent arginine decarboxylase.